The following is a 469-amino-acid chain: MPSSSLAIRESPKLLKAQGSLLIAEPMKGVSYGEVVEVVLGSGETRLGQVIDVSRDATIIQVFGGVSDIDLKISKVRYRGETLKLPVSIDMLGRIFDGLGRPIDGGPPIVPEDYLDINGSPINPASRLPPSEFIETGISAIDGLNSIVRGQKLPIFSGSGLPHNRIAAQIVRQARVRGKEEKFAVVFAAIGVSYDDAMFFIENFKNYGALENAVAFINTADSPVIERIAIPRIALTAAEFLAWKHDMHVLAILTDMTNYCEALRELSAAREEVPSRRGYPGYMYTDLATIYERAGRVEGKKGSVTQMPILTMPNDDITHPIPDLTGYITEGQLVLSRQLWLKGIYPPFDILMSLSRLMKDGIGPGKTREDHRGVFMQLYSAYAEGVRLRELAVVVGTEALSARDRKYLEFADRFEKEFIGQGEYERRTIEETLDKGWELLAILPEDELKHVRIEHIRKYHPKYRGKTSR.

The protein belongs to the ATPase alpha/beta chains family. As to quaternary structure, has multiple subunits with at least A(3), B(3), C, D, E, F, H, I and proteolipid K(x).

Its subcellular location is the cell membrane. Component of the A-type ATP synthase that produces ATP from ADP in the presence of a proton gradient across the membrane. The B chain is a regulatory subunit. This Staphylothermus marinus (strain ATCC 43588 / DSM 3639 / JCM 9404 / F1) protein is A-type ATP synthase subunit B.